Consider the following 199-residue polypeptide: Adenylyl-sulfate kinase (199 aa).

Residues 1-22 form a disordered region; the sequence is MSESNHITWHDSEVTKKQRQHK. 34–41 provides a ligand contact to ATP; that stretch reads GLSGSGKS. Ser108 (phosphoserine intermediate) is an active-site residue.

The protein belongs to the APS kinase family.

It carries out the reaction adenosine 5'-phosphosulfate + ATP = 3'-phosphoadenylyl sulfate + ADP + H(+). The protein operates within sulfur metabolism; hydrogen sulfide biosynthesis; sulfite from sulfate: step 2/3. Its function is as follows. Catalyzes the synthesis of activated sulfate. This chain is Adenylyl-sulfate kinase, found in Staphylococcus epidermidis (strain ATCC 12228 / FDA PCI 1200).